Here is a 30-residue protein sequence, read N- to C-terminus: AESKKGFLPVIDKKDGYTFLYPFGGQEVSI.

Its subcellular location is the plastid. It is found in the chloroplast thylakoid lumen. The chain is Thylakoid lumenal 17 kDa protein from Spinacia oleracea (Spinach).